Consider the following 1370-residue polypeptide: DNA-directed RNA polymerase subunit beta (1370 aa).

Belongs to the RNA polymerase beta chain family. In terms of assembly, the RNAP catalytic core consists of 2 alpha, 1 beta, 1 beta' and 1 omega subunit. When a sigma factor is associated with the core the holoenzyme is formed, which can initiate transcription.

It carries out the reaction RNA(n) + a ribonucleoside 5'-triphosphate = RNA(n+1) + diphosphate. Its function is as follows. DNA-dependent RNA polymerase catalyzes the transcription of DNA into RNA using the four ribonucleoside triphosphates as substrates. This Geobacter metallireducens (strain ATCC 53774 / DSM 7210 / GS-15) protein is DNA-directed RNA polymerase subunit beta.